Reading from the N-terminus, the 269-residue chain is Energy-coupling factor transporter ATP-binding protein EcfA1 (269 aa).

In terms of domain architecture, ABC transporter spans 8-242; that stretch reads IVFKNVSFQY…AEELTRIGLD (235 aa). 42–49 contacts ATP; the sequence is GHNGSGKS.

The protein belongs to the ABC transporter superfamily. Energy-coupling factor EcfA family. As to quaternary structure, forms a stable energy-coupling factor (ECF) transporter complex composed of 2 membrane-embedded substrate-binding proteins (S component), 2 ATP-binding proteins (A component) and 2 transmembrane proteins (T component).

The protein resides in the cell membrane. Functionally, ATP-binding (A) component of a common energy-coupling factor (ECF) ABC-transporter complex. Unlike classic ABC transporters this ECF transporter provides the energy necessary to transport a number of different substrates. The chain is Energy-coupling factor transporter ATP-binding protein EcfA1 from Staphylococcus aureus (strain USA300).